A 446-amino-acid polypeptide reads, in one-letter code: METSFVQTTMALGLSSKKASSRNVAVERKNLITVCRFSVKTLLEKYTAEPIDDSSEEFVNFAAILEQILSHRFKACAPAGPVSWFSSDGQRGFWDYIRLACSKVPNNCVSSIENMENISTARAKGRAWIRVALMEKRMSEYITTALRDTRTTRRFYDSGAIMLRDEATILTGMLIGLSAIDFSFCLKGEVLDGKTPVVIDYTPYLKFTQSYDYLTDEEERHSAESSTSEDNSPEHPYLPLVTDEDSWYSKWHKMEQKFRIVYAQKGYLEELVRLRESQLKDLEAENRRLQLQLEEAAAQNQREKRELEGVILELQEQLTGLIPSDHAPLAQGSKELTTPLVNQWPSLGTLNGAEGASNSKLYRRHSFMSTEPLSAEASLSSDSQRLGEGTRDEEPWGPIGKDPTPSMLGLCGSLASIPSCKSLASFKSNECLVSDSPEGSPALSPS.

The interval 1–298 (METSFVQTTM…LQLQLEEAAA (298 aa)) is interaction with RAP2A. The region spanning 52-189 (DDSSEEFVNF…IDFSFCLKGE (138 aa)) is the RUN domain. Phosphothreonine is present on Thr-215. The tract at residues 216–239 (DEEERHSAESSTSEDNSPEHPYLP) is disordered. At Ser-232 the chain carries Phosphoserine. Positions 267 to 322 (YLEELVRLRESQLKDLEAENRRLQLQLEEAAAQNQREKRELEGVILELQEQLTGLI) form a coiled coil. The span at 372-384 (PLSAEASLSSDSQ) shows a compositional bias: polar residues. The disordered stretch occupies residues 372-404 (PLSAEASLSSDSQRLGEGTRDEEPWGPIGKDPT). A phosphoserine mark is found at Ser-416 and Ser-419.

The protein belongs to the RUNDC3 family. In terms of assembly, interacts with the GTP-bound form of RAP2A.

Functionally, may act as an effector of RAP2A in neuronal cells. The protein is RUN domain-containing protein 3A (RUNDC3A) of Pongo abelii (Sumatran orangutan).